Reading from the N-terminus, the 238-residue chain is Large ribosomal subunit protein uL1 (238 aa).

This sequence belongs to the universal ribosomal protein uL1 family. In terms of assembly, part of the 50S ribosomal subunit.

In terms of biological role, binds directly to 23S rRNA. The L1 stalk is quite mobile in the ribosome, and is involved in E site tRNA release. Protein L1 is also a translational repressor protein, it controls the translation of the L11 operon by binding to its mRNA. This is Large ribosomal subunit protein uL1 from Trichormus variabilis (strain ATCC 29413 / PCC 7937) (Anabaena variabilis).